The chain runs to 598 residues: Arginine--tRNA ligase (598 aa).

The 'HIGH' region signature appears at 140–150 (ANPTGPLHVGH).

It belongs to the class-I aminoacyl-tRNA synthetase family. As to quaternary structure, monomer.

The protein resides in the cytoplasm. The enzyme catalyses tRNA(Arg) + L-arginine + ATP = L-arginyl-tRNA(Arg) + AMP + diphosphate. In Synechococcus sp. (strain JA-3-3Ab) (Cyanobacteria bacterium Yellowstone A-Prime), this protein is Arginine--tRNA ligase.